The sequence spans 262 residues: Glucosamine-6-phosphate deaminase (262 aa).

The Proton acceptor; for enolization step role is filled by D63. The active-site For ring-opening step is the N129. The active-site Proton acceptor; for ring-opening step is the H131. The active-site For ring-opening step is the E136.

This sequence belongs to the glucosamine/galactosamine-6-phosphate isomerase family. NagB subfamily.

It catalyses the reaction alpha-D-glucosamine 6-phosphate + H2O = beta-D-fructose 6-phosphate + NH4(+). The protein operates within amino-sugar metabolism; N-acetylneuraminate degradation; D-fructose 6-phosphate from N-acetylneuraminate: step 5/5. Catalyzes the reversible isomerization-deamination of glucosamine 6-phosphate (GlcN6P) to form fructose 6-phosphate (Fru6P) and ammonium ion. The polypeptide is Glucosamine-6-phosphate deaminase (Bacillus cytotoxicus (strain DSM 22905 / CIP 110041 / 391-98 / NVH 391-98)).